Consider the following 412-residue polypeptide: Putative disintegrin and metalloproteinase domain-containing protein 5 (412 aa).

One can recognise a Disintegrin domain in the interval 111 to 199; that stretch reads EKYADTNILL…YCLPDTYVRD (89 aa). Residues 351–385 form the EGF-like domain; sequence NLKLCDASNHCDRHGVCNNFNHCHCEKGYNPPYCQ.

In terms of assembly, interacts with TEX101. Highly expressed in testis.

In terms of biological role, this is a non catalytic metalloprotease-like protein. The protein is Putative disintegrin and metalloproteinase domain-containing protein 5 (ADAM5) of Homo sapiens (Human).